The primary structure comprises 644 residues: Exoribonuclease 2 (644 aa).

Positions 189–516 (RQDLTALNFV…NHRLLKAAIK (328 aa)) constitute an RNB domain. The region spanning 561–643 (DTRFAAEIID…ETRSIIARPV (83 aa)) is the S1 motif domain.

Belongs to the RNR ribonuclease family. RNase II subfamily.

It localises to the cytoplasm. It catalyses the reaction Exonucleolytic cleavage in the 3'- to 5'-direction to yield nucleoside 5'-phosphates.. Its function is as follows. Involved in mRNA degradation. Hydrolyzes single-stranded polyribonucleotides processively in the 3' to 5' direction. In Escherichia fergusonii (strain ATCC 35469 / DSM 13698 / CCUG 18766 / IAM 14443 / JCM 21226 / LMG 7866 / NBRC 102419 / NCTC 12128 / CDC 0568-73), this protein is Exoribonuclease 2.